The primary structure comprises 371 residues: GTPase Obg (371 aa).

The 159-residue stretch at 1 to 159 (MKFLDQAKVY…KTIWLRLKLI (159 aa)) folds into the Obg domain. Residues 160–327 (ADAGLVGLPN…VLRALRDIIV (168 aa)) enclose the OBG-type G domain. GTP contacts are provided by residues 166–173 (GLPNAGKS), 191–195 (FTTLH), 212–215 (DIPG), 279–282 (SQID), and 308–310 (SAI). Residues S173 and T193 each coordinate Mg(2+). The disordered stretch occupies residues 337–371 (APMKALKVRHRDMQSSGNEGESEDNSDRDDEEQQG). Positions 356–371 (GESEDNSDRDDEEQQG) are enriched in acidic residues.

This sequence belongs to the TRAFAC class OBG-HflX-like GTPase superfamily. OBG GTPase family. In terms of assembly, monomer. The cofactor is Mg(2+).

It is found in the cytoplasm. Its function is as follows. An essential GTPase which binds GTP, GDP and possibly (p)ppGpp with moderate affinity, with high nucleotide exchange rates and a fairly low GTP hydrolysis rate. Plays a role in control of the cell cycle, stress response, ribosome biogenesis and in those bacteria that undergo differentiation, in morphogenesis control. The protein is GTPase Obg of Rhizobium rhizogenes (strain K84 / ATCC BAA-868) (Agrobacterium radiobacter).